Reading from the N-terminus, the 524-residue chain is MGKGFLDCESLVALQEMALHPIDLTASGCLSEERIQKNSLSAEGFTYSYATERVDDRCLEALQGLTEERELIKQMECMQQGAIMNRIEGFQSESRPVLHTATRAWVRDQDLHEEAAAIARHSKEEALRLAEFLYIARAKFSTLVQMGIGGSELGPKAMYFAMQGSCPSDKRIFFVSNIDPDNAAEVLREIDLEQTLVVVVSKSGTTLEPAANEELFRQAYQNKGLSIAKHFVAVTSQGSPMDDKSRYLEVFHLWDSIGGRFSATSMVGGVVLGFAFGYEAFIEFLQGAAAIDAHALTPKMRENLPLLSAMLGVWNRNLLGYPTTAVIPYSTGLKYFTAHLQQCGMESNGKSISREGKEISFRTSPIIWGDVGTNCQHSFFQSLHQGTDIVPVEFIGFLHNQRGLDCVLSGSSSSQKLFANLVAQSLALAQGRDNANSNKRFKGNRPSSILVAQQLSPRIAGSLLAFYEHKFAFQGFCWGINSFDQEGVSLGKELATQIIGIMSGNAPVEFPEARGMLRLFNVLT.

Catalysis depends on Glu-346, which acts as the Proton donor. Catalysis depends on residues His-377 and Lys-492.

This sequence belongs to the GPI family.

It is found in the cytoplasm. The catalysed reaction is alpha-D-glucose 6-phosphate = beta-D-fructose 6-phosphate. The protein operates within carbohydrate biosynthesis; gluconeogenesis. It functions in the pathway carbohydrate degradation; glycolysis; D-glyceraldehyde 3-phosphate and glycerone phosphate from D-glucose: step 2/4. Catalyzes the reversible isomerization of glucose-6-phosphate to fructose-6-phosphate. The polypeptide is Glucose-6-phosphate isomerase (Chlamydia trachomatis serovar A (strain ATCC VR-571B / DSM 19440 / HAR-13)).